Reading from the N-terminus, the 390-residue chain is Lipid-A-disaccharide synthase (390 aa).

It belongs to the LpxB family.

The enzyme catalyses a lipid X + a UDP-2-N,3-O-bis[(3R)-3-hydroxyacyl]-alpha-D-glucosamine = a lipid A disaccharide + UDP + H(+). It participates in bacterial outer membrane biogenesis; LPS lipid A biosynthesis. Condensation of UDP-2,3-diacylglucosamine and 2,3-diacylglucosamine-1-phosphate to form lipid A disaccharide, a precursor of lipid A, a phosphorylated glycolipid that anchors the lipopolysaccharide to the outer membrane of the cell. In Rickettsia felis (strain ATCC VR-1525 / URRWXCal2) (Rickettsia azadi), this protein is Lipid-A-disaccharide synthase.